Reading from the N-terminus, the 196-residue chain is GTP cyclohydrolase 1 (196 aa).

Zn(2+) is bound by residues cysteine 86, histidine 89, and cysteine 158.

The protein belongs to the GTP cyclohydrolase I family. Toroid-shaped homodecamer, composed of two pentamers of five dimers.

It catalyses the reaction GTP + H2O = 7,8-dihydroneopterin 3'-triphosphate + formate + H(+). It participates in cofactor biosynthesis; 7,8-dihydroneopterin triphosphate biosynthesis; 7,8-dihydroneopterin triphosphate from GTP: step 1/1. This is GTP cyclohydrolase 1 from Clostridium botulinum (strain Langeland / NCTC 10281 / Type F).